The primary structure comprises 171 residues: Endoribonuclease YbeY (171 aa).

Zn(2+) contacts are provided by His126, His130, and His136.

This sequence belongs to the endoribonuclease YbeY family. The cofactor is Zn(2+).

Its subcellular location is the cytoplasm. Single strand-specific metallo-endoribonuclease involved in late-stage 70S ribosome quality control and in maturation of the 3' terminus of the 16S rRNA. This Rhizobium etli (strain ATCC 51251 / DSM 11541 / JCM 21823 / NBRC 15573 / CFN 42) protein is Endoribonuclease YbeY.